Consider the following 1099-residue polypeptide: MAYAADQIEMITRIVEEAGELLPPQAPLGYFSHHNPLHALEELPFQRAVEHASAMLGTEALQTEEAFAAHLASGRILPRDLAAVLEHHGDRAGAVPGRHLPVGDQGPRGAGEEMLDGDAEVVPGGPTWNEFRLARLGLFIDVPRGAGALWALADGGELHRVHPLVTEARREELTRQGRRRFATTERRTRRTRRSRAARLQALRARLLAQLWEDLRRHAPPPAPRPAPLRRRDQVLEQFGVDTDEAVHPVLIRLCAAFLDQGVAAWEMPHREKGLLAAFRHLFGTLGAPREACWAGLGGQLRQQLRMNWSAERTVAWALWALQVPVHAWADTVRAALVSLRGWAGMVHQFECRPDRAPSRPAPARLMDYLAVQLTLEVVVSHNVLARLIGPDARPEDLGPLGPPGAAQGVLATGTTAQDDLTQGEQELRGGDLELAYEAFVLAQVMDVETEVLGHPRWARAWLRAVAEFDAGRRRWLLHLAYERRYRTQVLDALSAHDRRFPGTVPPPDFQAVFCMDEREESLRRHLEESHPQVRTYGASGYFGVAMAYQGLDDVRPRALCPVTMTPRSLVVERAVDDGELVAYQRARRRKAQLQHTISAARGRPARAAAYSAIAGLAELVPLAARAVAPRAAGEGVRMLGRREPARPLARLVIEAAQDHTPSTGPAGDGAQAGEAGELVPGVGAGPLRLGFTVEEMAEIVDTLLTTIGMSGPLGPVVFVIGHGSSSVNNPHAAAYDCGATGGGQSGPNARAFAAMANHPRVRAALAHRGRLIGPDTWFVGGHHDTCDSSLAYYDTDLVPAHLRPALTAATDALLTAVQLDAHERCRRFESVGPDVAAGTAHAHVRGRSEDIGQSRPEYGHSTNATCVIGRRSRTRGLYLDRRSFLVSYDPTADPDGAVLTRLLLSAAPVGAGINLEYYFSRIDPIGYGAGSKLPHNITGLVGVMDGHGSDLRTGMPWQSVEIHEPMRLLVIAEAEPERLARIVRENPPLRGLVEGGWIQLAAWDPSGPETYLYRDGAFEQHQPENLRFPVVARSEHYYAGQRDHLPPAHVLAAFGESPDAVIDRPGTVAAAGAGAAQPTRDAIELPEQASGPLPARDGQ.

Residues 175–194 (RQGRRRFATTERRTRRTRRS) are disordered. The span at 176–194 (QGRRRFATTERRTRRTRRS) shows a compositional bias: basic residues. Positions 514, 516, 722, and 737 each coordinate Zn(2+). The interval 1071–1099 (AGAGAAQPTRDAIELPEQASGPLPARDGQ) is disordered.

The protein belongs to the inorganic carbon transporter (TC 9.A.2) DabA family. As to quaternary structure, forms a complex with DabB. Requires Zn(2+) as cofactor.

It is found in the cell membrane. Part of an energy-coupled inorganic carbon pump. This is Probable inorganic carbon transporter subunit DabA from Parafrankia sp. (strain EAN1pec).